Here is a 321-residue protein sequence, read N- to C-terminus: Porphobilinogen deaminase (321 aa).

The residue at position 246 (cysteine 246) is an S-(dipyrrolylmethanemethyl)cysteine.

The protein belongs to the HMBS family. As to quaternary structure, monomer. Dipyrromethane is required as a cofactor.

It catalyses the reaction 4 porphobilinogen + H2O = hydroxymethylbilane + 4 NH4(+). Its pathway is porphyrin-containing compound metabolism; protoporphyrin-IX biosynthesis; coproporphyrinogen-III from 5-aminolevulinate: step 2/4. Its function is as follows. Tetrapolymerization of the monopyrrole PBG into the hydroxymethylbilane pre-uroporphyrinogen in several discrete steps. The polypeptide is Porphobilinogen deaminase (Helicobacter hepaticus (strain ATCC 51449 / 3B1)).